The primary structure comprises 209 residues: MARNTGPLCKLCRREGMKLYLKGERCFSEKCPFDKRPFAPGQHGREKKKLTQYALQLRAKQTMKRIYGVLEKQFRIYYERAVKQSGDTRENLVAQVERRLDNVVYRLGFAINRRAARQLVSHGHVLVNGKKVDIPSYQVRPGDVISIKEGSRTIEPIKQAIELNKGRAISNWLEVDYDQFKGVYVRNPKLEEIIDLPVNVQAIVEFYSR.

Residues 98 to 166 (RRLDNVVYRL…IKQAIELNKG (69 aa)) enclose the S4 RNA-binding domain.

Belongs to the universal ribosomal protein uS4 family. Part of the 30S ribosomal subunit. Contacts protein S5. The interaction surface between S4 and S5 is involved in control of translational fidelity.

In terms of biological role, one of the primary rRNA binding proteins, it binds directly to 16S rRNA where it nucleates assembly of the body of the 30S subunit. Its function is as follows. With S5 and S12 plays an important role in translational accuracy. The chain is Small ribosomal subunit protein uS4 from Fervidobacterium nodosum (strain ATCC 35602 / DSM 5306 / Rt17-B1).